The primary structure comprises 167 residues: Anaerobic nitrite reductase NSHB4 (167 aa).

The 151-residue stretch at 12–162 (RFTEEQEALV…LVAAIKEGMK (151 aa)) folds into the Globin domain. A Homodimerization motif is present at residues 45–49 (EVAPS). 5 residues coordinate heme b: serine 55, histidine 73, arginine 103, threonine 107, and histidine 108. Residues 115–127 (DTHFEVARFALLE) carry the Homodimerization motif.

It belongs to the plant globin family. In terms of assembly, homodimer. Heme b serves as cofactor.

It is found in the cytoplasm. It localises to the nucleus. It catalyses the reaction Fe(III)-heme b-[protein] + nitric oxide + H2O = Fe(II)-heme b-[protein] + nitrite + 2 H(+). Its function is as follows. Phytoglobin that reduces nitrite to nitric oxide under anoxic conditions (e.g. during flooding or in waterlogged soil). May not function as an oxygen storage or transport protein. Has an unusually high affinity for O(2) through an hexacoordinate heme iron because of a very low dissociation constant. The polypeptide is Anaerobic nitrite reductase NSHB4 (Oryza sativa subsp. indica (Rice)).